Reading from the N-terminus, the 382-residue chain is S-adenosylmethionine synthase (382 aa).

An ATP-binding site is contributed by His15. Asp17 lines the Mg(2+) pocket. Glu43 provides a ligand contact to K(+). L-methionine-binding residues include Glu56 and Gln99. A flexible loop region spans residues 99–109; it reads QSPDINQGVDR. Residues 164-166, 230-231, Asp239, 245-246, Ala262, and Lys266 each bind ATP; these read DAK, RF, and RK. Asp239 contributes to the L-methionine binding site. Lys270 contributes to the L-methionine binding site.

The protein belongs to the AdoMet synthase family. Homotetramer; dimer of dimers. Mg(2+) serves as cofactor. The cofactor is K(+).

It localises to the cytoplasm. It carries out the reaction L-methionine + ATP + H2O = S-adenosyl-L-methionine + phosphate + diphosphate. It functions in the pathway amino-acid biosynthesis; S-adenosyl-L-methionine biosynthesis; S-adenosyl-L-methionine from L-methionine: step 1/1. Catalyzes the formation of S-adenosylmethionine (AdoMet) from methionine and ATP. The overall synthetic reaction is composed of two sequential steps, AdoMet formation and the subsequent tripolyphosphate hydrolysis which occurs prior to release of AdoMet from the enzyme. This chain is S-adenosylmethionine synthase, found in Glaesserella parasuis serovar 5 (strain SH0165) (Haemophilus parasuis).